A 969-amino-acid chain; its full sequence is Lateral signaling target protein 2 homolog (969 aa).

A Glycyl lysine isopeptide (Lys-Gly) (interchain with G-Cter in ubiquitin) cross-link involves residue Lys-87. Disordered regions lie at residues 290 to 323 (QDGEFPTSSTNDPSASTGPDSQTEELEKEKGVEE), 336 to 360 (SVWKEEEEKQVLPESSSESEEEEPI), 390 to 437 (STLL…YHDD), and 715 to 777 (RSEC…DMSE). Polar residues predominate over residues 295–310 (PTSSTNDPSASTGPDS). Residues 336–346 (SVWKEEEEKQV) are compositionally biased toward basic and acidic residues. Positions 391-402 (TLLSPPSQNQSP) are enriched in polar residues. Low complexity predominate over residues 411–423 (GSSLEGSSATSST). Residues 715–729 (RSECFGKQSKDDNRK) show a composition bias toward basic and acidic residues. Low complexity-rich tracts occupy residues 732 to 745 (SSSQESPLSSVPSS) and 756 to 769 (SLSSSYAPSPVSSL). Residues 899 to 959 (DEACNSCIAC…VCTHCYMFHV (61 aa)) form an FYVE-type zinc finger. Zn(2+) is bound by residues Cys-905, Cys-908, Cys-921, Cys-924, Cys-929, Cys-932, Cys-951, and Cys-954.

It belongs to the lst-2 family. In terms of processing, monoubiquitination at Lys-87 prevents binding to phosphatidylinositol 3-phosphate (PI3P) and localization to early endosome membranes.

Its subcellular location is the cytoplasm. The protein resides in the cytosol. It localises to the early endosome membrane. Negative regulator of epidermal growth factor receptor (EGFR) signaling. Acts by promoting EGFR degradation in endosomes when not monoubiquitinated. This chain is Lateral signaling target protein 2 homolog (zfyve28), found in Danio rerio (Zebrafish).